The sequence spans 228 residues: Ankyrin repeat domain-containing protein 46 (228 aa).

4 ANK repeats span residues 11 to 40, 44 to 73, 77 to 103, and 107 to 138; these read QTNV…DPNI, RGRT…DLLA, QGNT…KIDI, and QGAT…EVKG. The chain crosses the membrane as a helical span at residues 195 to 215; that stretch reads VLLLIFVIALLSLGIAYYVSG.

The protein localises to the membrane. The polypeptide is Ankyrin repeat domain-containing protein 46 (ANKRD46) (Bos taurus (Bovine)).